The primary structure comprises 167 residues: uncharacterized protein (167 aa).

Residues 28–59 (LTGIREELKADIDETRLIAESVLEEKEKKVVE) are a coiled coil.

This is an uncharacterized protein from Aquifex aeolicus (strain VF5).